The chain runs to 341 residues: Ribosomal RNA small subunit methyltransferase H (341 aa).

S-adenosyl-L-methionine is bound by residues 47–49 (GGY), Asp64, Phe91, Asp109, and Gln116. The segment at 292–318 (VAASEDEASRNPRARSAKLRAGVRTPA) is disordered.

It belongs to the methyltransferase superfamily. RsmH family.

Its subcellular location is the cytoplasm. The enzyme catalyses cytidine(1402) in 16S rRNA + S-adenosyl-L-methionine = N(4)-methylcytidine(1402) in 16S rRNA + S-adenosyl-L-homocysteine + H(+). Its function is as follows. Specifically methylates the N4 position of cytidine in position 1402 (C1402) of 16S rRNA. The protein is Ribosomal RNA small subunit methyltransferase H of Sinorhizobium fredii (strain NBRC 101917 / NGR234).